The chain runs to 334 residues: Ornithine carbamoyltransferase (334 aa).

Carbamoyl phosphate is bound by residues 57–60 (STRT), Q84, R108, and 135–138 (HPTQ). Residues N169, D233, and 237 to 238 (SM) each bind L-ornithine. Carbamoyl phosphate-binding positions include 275–276 (CL) and R320.

This sequence belongs to the aspartate/ornithine carbamoyltransferase superfamily. OTCase family.

Its subcellular location is the cytoplasm. The catalysed reaction is carbamoyl phosphate + L-ornithine = L-citrulline + phosphate + H(+). It functions in the pathway amino-acid biosynthesis; L-arginine biosynthesis; L-arginine from L-ornithine and carbamoyl phosphate: step 1/3. Functionally, reversibly catalyzes the transfer of the carbamoyl group from carbamoyl phosphate (CP) to the N(epsilon) atom of ornithine (ORN) to produce L-citrulline. This Aeromonas hydrophila subsp. hydrophila (strain ATCC 7966 / DSM 30187 / BCRC 13018 / CCUG 14551 / JCM 1027 / KCTC 2358 / NCIMB 9240 / NCTC 8049) protein is Ornithine carbamoyltransferase.